The following is a 100-amino-acid chain: Urease subunit gamma (100 aa).

It belongs to the urease gamma subunit family. As to quaternary structure, heterotrimer of UreA (gamma), UreB (beta) and UreC (alpha) subunits. Three heterotrimers associate to form the active enzyme.

The protein localises to the cytoplasm. The enzyme catalyses urea + 2 H2O + H(+) = hydrogencarbonate + 2 NH4(+). It participates in nitrogen metabolism; urea degradation; CO(2) and NH(3) from urea (urease route): step 1/1. In Paraburkholderia phytofirmans (strain DSM 17436 / LMG 22146 / PsJN) (Burkholderia phytofirmans), this protein is Urease subunit gamma.